Consider the following 177-residue polypeptide: Endoribonuclease YbeY (177 aa).

The Zn(2+) site is built by His-118, His-122, and His-128.

The protein belongs to the endoribonuclease YbeY family. Requires Zn(2+) as cofactor.

The protein localises to the cytoplasm. In terms of biological role, single strand-specific metallo-endoribonuclease involved in late-stage 70S ribosome quality control and in maturation of the 3' terminus of the 16S rRNA. The sequence is that of Endoribonuclease YbeY from Mycobacterium bovis (strain ATCC BAA-935 / AF2122/97).